Consider the following 263-residue polypeptide: Hydroxyethylthiazole kinase (263 aa).

Residue Met-45 participates in substrate binding. ATP contacts are provided by Arg-121 and Ser-167. Residue Gly-194 coordinates substrate.

It belongs to the Thz kinase family. Mg(2+) serves as cofactor.

It carries out the reaction 5-(2-hydroxyethyl)-4-methylthiazole + ATP = 4-methyl-5-(2-phosphooxyethyl)-thiazole + ADP + H(+). It functions in the pathway cofactor biosynthesis; thiamine diphosphate biosynthesis; 4-methyl-5-(2-phosphoethyl)-thiazole from 5-(2-hydroxyethyl)-4-methylthiazole: step 1/1. In terms of biological role, catalyzes the phosphorylation of the hydroxyl group of 4-methyl-5-beta-hydroxyethylthiazole (THZ). The polypeptide is Hydroxyethylthiazole kinase (Vibrio campbellii (strain ATCC BAA-1116)).